We begin with the raw amino-acid sequence, 226 residues long: Protein pdh1 (226 aa).

An N-terminal signal peptide occupies residues methionine 1–glycine 26. At isoleucine 27–threonine 41 the chain is on the extracellular side. A helical transmembrane segment spans residues phenylalanine 42–isoleucine 62. The Cytoplasmic segment spans residues threonine 63 to serine 65. The helical transmembrane segment at phenylalanine 66–valine 86 threads the bilayer. Residues glutamate 87–tyrosine 97 are Extracellular-facing. Residues leucine 98–isoleucine 118 traverse the membrane as a helical segment. Over alanine 119–phenylalanine 191 the chain is Cytoplasmic. Residues cysteine 192–valine 212 traverse the membrane as a helical segment. The Extracellular segment spans residues glutamine 213 to isoleucine 226.

Its subcellular location is the membrane. In Schizosaccharomyces pombe (strain 972 / ATCC 24843) (Fission yeast), this protein is Protein pdh1 (pdh1).